Here is a 351-residue protein sequence, read N- to C-terminus: Succinylglutamate desuccinylase (351 aa).

Zn(2+) contacts are provided by His-73, Glu-76, and His-168. The active site involves Glu-231.

Belongs to the AspA/AstE family. Succinylglutamate desuccinylase subfamily. The cofactor is Zn(2+).

It catalyses the reaction N-succinyl-L-glutamate + H2O = L-glutamate + succinate. It functions in the pathway amino-acid degradation; L-arginine degradation via AST pathway; L-glutamate and succinate from L-arginine: step 5/5. Transforms N(2)-succinylglutamate into succinate and glutamate. The sequence is that of Succinylglutamate desuccinylase from Burkholderia lata (strain ATCC 17760 / DSM 23089 / LMG 22485 / NCIMB 9086 / R18194 / 383).